The following is a 363-amino-acid chain: Probable endopolygalacturonase A (363 aa).

The first 20 residues, 1–20 (MQLLQSSVIAATVGAALVAA), serve as a signal peptide directing secretion. Positions 21–28 (APVELEAR) are excised as a propeptide. Cys31 and Cys46 are disulfide-bonded. PbH1 repeat units follow at residues 158–187 (SDNL…DIGS), 188–209 (STYI…AINS), 210–230 (GSHI…SIGS), 239–260 (VEDV…RIKT), 268–290 (VSNV…VVEQ), and 302–347 (TNGI…SITG). N-linked (GlcNAc...) asparagine glycosylation occurs at Asn162. The Proton donor role is filled by Asp202. Cys204 and Cys220 are oxidised to a cystine. His224 is a catalytic residue. 2 disulfides stabilise this stretch: Cys330–Cys335 and Cys354–Cys363.

It belongs to the glycosyl hydrolase 28 family.

It is found in the secreted. It catalyses the reaction (1,4-alpha-D-galacturonosyl)n+m + H2O = (1,4-alpha-D-galacturonosyl)n + (1,4-alpha-D-galacturonosyl)m.. Functionally, involved in maceration and soft-rotting of plant tissue. Hydrolyzes the 1,4-alpha glycosidic bonds of de-esterified pectate in the smooth region of the plant cell wall. The polypeptide is Probable endopolygalacturonase A (pgaA) (Aspergillus parasiticus).